The chain runs to 1059 residues: Protein OPAQUE10 (1059 aa).

A run of 7 repeats spans residues 269–342 (SLLE…KESC), 343–416 (SLLE…KESC), 417–490 (SPLE…KESC), 491–564 (SPLE…KESC), 565–638 (FPLE…KESC), 639–712 (SPLE…KESC), and 713–786 (SPLE…KESC). A 7 X approximate repeats region spans residues 269-786 (SLLEPEDSVN…SRPIHDKESC (518 aa)). The interval 511–534 (FNDAPNKESEGYGESGRGKHGEKS) is disordered. A compositionally biased stretch (basic and acidic residues) spans 515–534 (PNKESEGYGESGRGKHGEKS). 3 disordered regions span residues 732-756 (QYSD…EEKS), 856-875 (ETLA…DTGT), and 889-998 (SVCS…SGKG). Residues 858–869 (LADHPKKEEAGL) are compositionally biased toward basic and acidic residues. Polar residues-rich tracts occupy residues 907 to 924 (DFSS…NTGG) and 945 to 958 (ASDS…PEAS). Residues 984 to 994 (TRGRPEGDAPR) are compositionally biased toward basic and acidic residues. The chain crosses the membrane as a helical span at residues 1003-1023 (VAGGITLVGAVFFMFHLSAAL).

As to quaternary structure, homodimer. Interacts (via N-terminus) with FL1 (via C-terminus), HIP, 19 kDa alpha-zein (AC P06677), 22 kDa alpha-zein (AC O48966), 16 kDa gamma-zein (AC P08031) and 50 kDa gamma-zein (AC C0P381). Expressed in kernels.

The protein resides in the endoplasmic reticulum membrane. In terms of biological role, cereal endosperm protein required for the ring-shaped distribution of 22 kDa alpha- and 16 kDa gamma-zeins in protein bodies. In Zea mays (Maize), this protein is Protein OPAQUE10.